A 952-amino-acid chain; its full sequence is Lysosomal alpha-glucosidase (952 aa).

The N-terminal stretch at 1–27 is a signal peptide; sequence MRVRHPPCSRRLLAICALVSLATAALL. Positions 28 to 69 are excised as a propeptide; sequence GHILLHDFLLVPRELSGSSPVLEETHPAHQQGASRPGPRDAQ. The disordered stretch occupies residues 47–80; that stretch reads PVLEETHPAHQQGASRPGPRDAQAHLGRPRAVPT. A P-type domain is found at 80–131; sequence TQCDVPPNSRFDCAPDKAITREQCDARGCCYIPAKQGLRGAQMGQPWCFFPP. 3 disulfide bridges follow: cysteine 82-cysteine 109, cysteine 92-cysteine 108, and cysteine 103-cysteine 127. Asparagine 140, asparagine 233, and asparagine 390 each carry an N-linked (GlcNAc...) asparagine glycan. Aspartate 404 lines the substrate pocket. Asparagine 470 carries N-linked (GlcNAc...) asparagine glycosylation. Aspartate 518 functions as the Nucleophile in the catalytic mechanism. The active site involves glutamate 521. The cysteines at positions 533 and 558 are disulfide-linked. Substrate contacts are provided by arginine 600 and aspartate 616. Cysteine 647 and cysteine 658 are joined by a disulfide. The N-linked (GlcNAc...) asparagine glycan is linked to asparagine 652. Histidine 674 contacts substrate. N-linked (GlcNAc...) asparagine glycosylation is found at asparagine 882 and asparagine 925.

Belongs to the glycosyl hydrolase 31 family.

Its subcellular location is the lysosome. The protein resides in the lysosome membrane. It carries out the reaction Hydrolysis of terminal, non-reducing (1-&gt;4)-linked alpha-D-glucose residues with release of alpha-D-glucose.. Its function is as follows. Essential for the degradation of glycogen in lysosomes. Has highest activity on alpha-1,4-linked glycosidic linkages, but can also hydrolyze alpha-1,6-linked glucans. In Pongo abelii (Sumatran orangutan), this protein is Lysosomal alpha-glucosidase (GAA).